We begin with the raw amino-acid sequence, 205 residues long: Large ribosomal subunit protein uL4 (205 aa).

Positions 43–60 are enriched in polar residues; it reads ARSGNRAQQTRAEVSAST. The tract at residues 43–96 is disordered; sequence ARSGNRAQQTRAEVSASTHKPWRQKGTGRARSGRASSPIWRGGGVTFPNKPNEN. The segment covering 62-74 has biased composition (basic residues); sequence KPWRQKGTGRARS.

The protein belongs to the universal ribosomal protein uL4 family. Part of the 50S ribosomal subunit.

Its function is as follows. One of the primary rRNA binding proteins, this protein initially binds near the 5'-end of the 23S rRNA. It is important during the early stages of 50S assembly. It makes multiple contacts with different domains of the 23S rRNA in the assembled 50S subunit and ribosome. In terms of biological role, forms part of the polypeptide exit tunnel. The protein is Large ribosomal subunit protein uL4 of Thiobacillus denitrificans (strain ATCC 25259 / T1).